We begin with the raw amino-acid sequence, 312 residues long: Glyoxylate/hydroxypyruvate reductase A (312 aa).

Residue arginine 227 is part of the active site. Catalysis depends on histidine 275, which acts as the Proton donor.

The protein belongs to the D-isomer specific 2-hydroxyacid dehydrogenase family. GhrA subfamily.

It is found in the cytoplasm. The enzyme catalyses glycolate + NADP(+) = glyoxylate + NADPH + H(+). It catalyses the reaction (R)-glycerate + NAD(+) = 3-hydroxypyruvate + NADH + H(+). It carries out the reaction (R)-glycerate + NADP(+) = 3-hydroxypyruvate + NADPH + H(+). Its function is as follows. Catalyzes the NADPH-dependent reduction of glyoxylate and hydroxypyruvate into glycolate and glycerate, respectively. This Salmonella paratyphi B (strain ATCC BAA-1250 / SPB7) protein is Glyoxylate/hydroxypyruvate reductase A.